Reading from the N-terminus, the 118-residue chain is Fluoride-specific ion channel FluC 2 (118 aa).

Helical transmembrane passes span 1–21 (MIEA…RFAI), 33–53 (FPIA…YIIG), 55–75 (GVTT…FTTF), and 93–113 (TFLL…FLGM). 2 residues coordinate Na(+): G70 and T73.

Belongs to the fluoride channel Fluc/FEX (TC 1.A.43) family.

It localises to the cell membrane. It catalyses the reaction fluoride(in) = fluoride(out). Its activity is regulated as follows. Na(+) is not transported, but it plays an essential structural role and its presence is essential for fluoride channel function. In terms of biological role, fluoride-specific ion channel. Important for reducing fluoride concentration in the cell, thus reducing its toxicity. This Bacillus thuringiensis subsp. konkukian (strain 97-27) protein is Fluoride-specific ion channel FluC 2.